We begin with the raw amino-acid sequence, 134 residues long: Iron-sulfur cluster insertion protein ErpA (134 aa).

Iron-sulfur cluster is bound by residues cysteine 47, cysteine 126, and cysteine 128.

This sequence belongs to the HesB/IscA family. Homodimer. Requires iron-sulfur cluster as cofactor.

Required for insertion of 4Fe-4S clusters for at least IspG. The chain is Iron-sulfur cluster insertion protein ErpA from Coxiella burnetii (strain RSA 331 / Henzerling II).